Here is a 171-residue protein sequence, read N- to C-terminus: Shikimate kinase (171 aa).

Residue 11-16 (GTGKTT) participates in ATP binding. Residue T15 coordinates Mg(2+). D33, R57, and G79 together coordinate substrate. ATP is bound at residue R117. R136 contacts substrate.

This sequence belongs to the shikimate kinase family. As to quaternary structure, monomer. The cofactor is Mg(2+).

It is found in the cytoplasm. The catalysed reaction is shikimate + ATP = 3-phosphoshikimate + ADP + H(+). It participates in metabolic intermediate biosynthesis; chorismate biosynthesis; chorismate from D-erythrose 4-phosphate and phosphoenolpyruvate: step 5/7. Catalyzes the specific phosphorylation of the 3-hydroxyl group of shikimic acid using ATP as a cosubstrate. This Caldanaerobacter subterraneus subsp. tengcongensis (strain DSM 15242 / JCM 11007 / NBRC 100824 / MB4) (Thermoanaerobacter tengcongensis) protein is Shikimate kinase.